Reading from the N-terminus, the 438-residue chain is Putative F-box/FBD/LRR-repeat protein At5g44950 (438 aa).

The F-box domain occupies 3 to 49; sequence RDRISELPDGLLNHILMYLHIEESIRTSVLSSRWRKLWLKVPGLDVN. LRR repeat units follow at residues 246-275 and 286-310; these read LSSL…DLTK and ISSV…KIGQ. The FBD domain maps to 355-407; the sequence is PEQIDFTNLPRCLISTLEYVEIKQLTMREESGIKLVKYFLENSAVLKKLTLSF.

In Arabidopsis thaliana (Mouse-ear cress), this protein is Putative F-box/FBD/LRR-repeat protein At5g44950.